A 366-amino-acid chain; its full sequence is Chalcone synthase B (366 aa).

Residue Cys172 is part of the active site.

This sequence belongs to the thiolase-like superfamily. Chalcone/stilbene synthases family.

The catalysed reaction is (E)-4-coumaroyl-CoA + 3 malonyl-CoA + 3 H(+) = 2',4,4',6'-tetrahydroxychalcone + 3 CO2 + 4 CoA. Its pathway is secondary metabolite biosynthesis; flavonoid biosynthesis. Functionally, the primary product of this enzyme is 4,2',4',6'-tetrahydroxychalcone (also termed naringenin-chalcone or chalcone) which can under specific conditions spontaneously isomerize into naringenin. This is Chalcone synthase B (CHSB) from Ipomoea trifida (Morning glory).